A 276-amino-acid chain; its full sequence is 2-dehydro-3-deoxyphosphooctonate aldolase (276 aa).

Belongs to the KdsA family.

The protein localises to the cytoplasm. It catalyses the reaction D-arabinose 5-phosphate + phosphoenolpyruvate + H2O = 3-deoxy-alpha-D-manno-2-octulosonate-8-phosphate + phosphate. It functions in the pathway carbohydrate biosynthesis; 3-deoxy-D-manno-octulosonate biosynthesis; 3-deoxy-D-manno-octulosonate from D-ribulose 5-phosphate: step 2/3. It participates in bacterial outer membrane biogenesis; lipopolysaccharide biosynthesis. This chain is 2-dehydro-3-deoxyphosphooctonate aldolase, found in Helicobacter pylori (strain P12).